The following is an 89-amino-acid chain: Small ribosomal subunit protein uS15 (89 aa).

It belongs to the universal ribosomal protein uS15 family. As to quaternary structure, part of the 30S ribosomal subunit. Forms a bridge to the 50S subunit in the 70S ribosome, contacting the 23S rRNA.

One of the primary rRNA binding proteins, it binds directly to 16S rRNA where it helps nucleate assembly of the platform of the 30S subunit by binding and bridging several RNA helices of the 16S rRNA. Its function is as follows. Forms an intersubunit bridge (bridge B4) with the 23S rRNA of the 50S subunit in the ribosome. The chain is Small ribosomal subunit protein uS15 from Pseudomonas putida (strain GB-1).